Consider the following 365-residue polypeptide: tRNA(Met) cytidine acetate ligase (365 aa).

ATP-binding positions include 7–20 (IAEF…HKYL), glycine 96, asparagine 152, and arginine 175.

Belongs to the TmcAL family.

Its subcellular location is the cytoplasm. The enzyme catalyses cytidine(34) in elongator tRNA(Met) + acetate + ATP = N(4)-acetylcytidine(34) in elongator tRNA(Met) + AMP + diphosphate. Functionally, catalyzes the formation of N(4)-acetylcytidine (ac(4)C) at the wobble position of elongator tRNA(Met), using acetate and ATP as substrates. First activates an acetate ion to form acetyladenylate (Ac-AMP) and then transfers the acetyl group to tRNA to form ac(4)C34. The chain is tRNA(Met) cytidine acetate ligase from Streptococcus pneumoniae (strain 70585).